Consider the following 510-residue polypeptide: Protein disulfide-isomerase (510 aa).

The first 20 residues, 1 to 20 (MLRRALLCLALTALFRAGAG), serve as a signal peptide directing secretion. Positions 27–136 (HVLVLHKGNF…IVNWLKKRTG (110 aa)) constitute a Thioredoxin 1 domain. Active-site nucleophile residues include cysteine 55 and cysteine 58. Cysteines 55 and 58 form a disulfide. Lysine 202 carries the post-translational modification N6-acetyllysine. N6-succinyllysine occurs at positions 224 and 273. Serine 333 and serine 359 each carry phosphoserine. A Thioredoxin 2 domain is found at 351-477 (GKIKPHLMSQ…FKKFLESGGQ (127 aa)). Residues cysteine 399 and cysteine 402 each act as nucleophile in the active site. The cysteines at positions 399 and 402 are disulfide-linked. The residue at position 429 (serine 429) is a Phosphoserine. The segment at 473–510 (ESGGQDGAGDDDDLEDLEEAEEPDLEEDDDQKAVKDEL) is disordered. Residues 480 to 502 (AGDDDDLEDLEEAEEPDLEEDDD) are compositionally biased toward acidic residues. Residues 507-510 (KDEL) carry the Prevents secretion from ER motif.

Belongs to the protein disulfide isomerase family. Heterodimer; heterodimerizes with the protein microsomal triglyceride transfer MTTP. Homodimer. Monomers and homotetramers may also occur. Interacts with P4HA2, forming a heterotetramer consisting of 2 alpha subunits (P4HA2) and 2 beta (P4HB), where P4HB plays the role of a structural subunit; this tetramer catalyzes the formation of 4-hydroxyproline in collagen. Also constitutes the structural subunit of the microsomal triacylglycerol transfer protein MTTP in mammalian cells. Stabilizes both enzymes and retain them in the ER without contributing to the catalytic activity. Binds UBQLN1. Interacts with ERO1B. Interacts with ILDR2. Interacts with ERN1/IRE1A (via N-terminus); the interaction is enhanced by phosphorylation of P4HB by FAM20C in response to endoplasmic reticulum stress and results in attenuation of ERN1 activity. In terms of processing, phosphorylation of Ser-359 by FAM20C is induced by endoplasmic reticulum stress and results in a functional switch from oxidoreductase to molecular chaperone. It also promotes interaction with ERN1.

The protein localises to the endoplasmic reticulum. Its subcellular location is the endoplasmic reticulum lumen. The protein resides in the melanosome. It localises to the cell membrane. The enzyme catalyses Catalyzes the rearrangement of -S-S- bonds in proteins.. This multifunctional protein catalyzes the formation, breakage and rearrangement of disulfide bonds. At the cell surface, seems to act as a reductase that cleaves disulfide bonds of proteins attached to the cell. May therefore cause structural modifications of exofacial proteins. Inside the cell, seems to form/rearrange disulfide bonds of nascent proteins. At high concentrations and following phosphorylation by FAM20C, functions as a chaperone that inhibits aggregation of misfolded proteins. At low concentrations, facilitates aggregation (anti-chaperone activity). May be involved with other chaperones in the structural modification of the TG precursor in hormone biogenesis. Also acts as a structural subunit of various enzymes such as prolyl 4-hydroxylase and microsomal triacylglycerol transfer protein MTTP. Receptor for LGALS9; the interaction retains P4HB at the cell surface of Th2 T helper cells, increasing disulfide reductase activity at the plasma membrane, altering the plasma membrane redox state and enhancing cell migration. The chain is Protein disulfide-isomerase (P4HB) from Bos taurus (Bovine).